Here is a 334-residue protein sequence, read N- to C-terminus: Probable quinone oxidoreductase (334 aa).

It belongs to the zinc-containing alcohol dehydrogenase family. Quinone oxidoreductase subfamily.

The enzyme catalyses 2 a quinone + NADPH + H(+) = 2 a 1,4-benzosemiquinone + NADP(+). The protein is Probable quinone oxidoreductase (ZTA1) of Saccharomyces cerevisiae (strain ATCC 204508 / S288c) (Baker's yeast).